A 206-amino-acid polypeptide reads, in one-letter code: Thymidylate kinase (206 aa).

ATP is bound at residue 11–18; sequence GIDGAGKT.

The protein belongs to the thymidylate kinase family.

It carries out the reaction dTMP + ATP = dTDP + ADP. Functionally, phosphorylation of dTMP to form dTDP in both de novo and salvage pathways of dTTP synthesis. The polypeptide is Thymidylate kinase (Burkholderia vietnamiensis (strain G4 / LMG 22486) (Burkholderia cepacia (strain R1808))).